Consider the following 389-residue polypeptide: Dual-specificity RNA methyltransferase RlmN (389 aa).

Residue Glu110 is the Proton acceptor of the active site. The 240-residue stretch at Glu116–Asp355 folds into the Radical SAM core domain. Residues Cys123 and Cys360 are joined by a disulfide bond. [4Fe-4S] cluster is bound by residues Cys130, Cys134, and Cys137. S-adenosyl-L-methionine is bound by residues Gly184–Glu185, Ser216, Ser238–His240, and Asn317. Cys360 (S-methylcysteine intermediate) is an active-site residue.

It belongs to the radical SAM superfamily. RlmN family. Requires [4Fe-4S] cluster as cofactor.

It is found in the cytoplasm. The enzyme catalyses adenosine(2503) in 23S rRNA + 2 reduced [2Fe-2S]-[ferredoxin] + 2 S-adenosyl-L-methionine = 2-methyladenosine(2503) in 23S rRNA + 5'-deoxyadenosine + L-methionine + 2 oxidized [2Fe-2S]-[ferredoxin] + S-adenosyl-L-homocysteine. It carries out the reaction adenosine(37) in tRNA + 2 reduced [2Fe-2S]-[ferredoxin] + 2 S-adenosyl-L-methionine = 2-methyladenosine(37) in tRNA + 5'-deoxyadenosine + L-methionine + 2 oxidized [2Fe-2S]-[ferredoxin] + S-adenosyl-L-homocysteine. In terms of biological role, specifically methylates position 2 of adenine 2503 in 23S rRNA and position 2 of adenine 37 in tRNAs. m2A2503 modification seems to play a crucial role in the proofreading step occurring at the peptidyl transferase center and thus would serve to optimize ribosomal fidelity. This Erwinia tasmaniensis (strain DSM 17950 / CFBP 7177 / CIP 109463 / NCPPB 4357 / Et1/99) protein is Dual-specificity RNA methyltransferase RlmN.